A 209-amino-acid polypeptide reads, in one-letter code: Kynurenine formamidase (209 aa).

Substrate is bound at residue W20. Zn(2+)-binding residues include H50, H54, and D56. H60 functions as the Proton donor/acceptor in the catalytic mechanism. Positions 161 and 173 each coordinate Zn(2+).

The protein belongs to the Cyclase 1 superfamily. KynB family. In terms of assembly, homodimer. Zn(2+) serves as cofactor.

The catalysed reaction is N-formyl-L-kynurenine + H2O = L-kynurenine + formate + H(+). It participates in amino-acid degradation; L-tryptophan degradation via kynurenine pathway; L-kynurenine from L-tryptophan: step 2/2. In terms of biological role, catalyzes the hydrolysis of N-formyl-L-kynurenine to L-kynurenine, the second step in the kynurenine pathway of tryptophan degradation. This chain is Kynurenine formamidase, found in Bacillus cytotoxicus (strain DSM 22905 / CIP 110041 / 391-98 / NVH 391-98).